We begin with the raw amino-acid sequence, 113 residues long: Protein AaeX (113 aa).

2 helical membrane passes run 3–23 (LLPVMVIFGLSFPPVLFEMIL) and 43–63 (FVWHPALFNTALYCCVFYLIS).

The protein belongs to the AaeX family.

The protein localises to the cell membrane. This Sodalis glossinidius (strain morsitans) protein is Protein AaeX.